The following is an 83-amino-acid chain: Mu-theraphotoxin-Hhn2b 3 (83 aa).

The N-terminal stretch at 1–21 is a signal peptide; that stretch reads MKASMFLALAGLVLLFVVCYA. A propeptide spanning residues 22-48 is cleaved from the precursor; it reads SESEEKEFPRELISKIFAVDDFKGEVR. Cystine bridges form between Cys-50–Cys-65, Cys-57–Cys-70, and Cys-64–Cys-77. At Leu-81 the chain carries Leucine amide.

This sequence belongs to the neurotoxin 10 (Hwtx-1) family. 14 (Hntx-1) subfamily. In terms of assembly, monomer. In terms of tissue distribution, expressed by the venom gland.

The protein localises to the secreted. In terms of biological role, weakly blocks the rat SCN2A/SCN1B (Nav1.2/beta-1) sodium channel (IC(50)=68 uM) and the insect sodium channel para/tipE (IC(50)=4.3 uM), without altering the activation or inactivation kinetics (depressant toxin). The protein is Mu-theraphotoxin-Hhn2b 3 of Cyriopagopus hainanus (Chinese bird spider).